We begin with the raw amino-acid sequence, 541 residues long: MFQDKGWVLVTLIALVTPSWAAYKLQERYSWNQLDFAFPNARLKEQALASGDYIPQNALPVGVEHFGNRLFVTVPRWRDGIPATLTYINMDRSLTGSPELIPYPDWRSNTAGDCANSITTAYRIKVDECGRLWVLDTGTVGIGNTTTNPCPYAVNVYDLTTDTRIRRYVLPAVDTNPNTFIANIAVDIGKNCDDAYAYFADELGYGLIAYSWEQDKSWRFSAHSYFFPDPLRGDFNVAGINFQWGEEGIFGMSLSPIRSDGYRTLYFSPLASHRQFAVSTRILRDETRTEDSYHDFVALDERGPNSHTTSRVMSDDGIELFNLIDQNAVGCWHSSMPYSPQFHGIVDRDDVGLVFPADVKIDENKNVWVLSDRMPVFLLSDLDYSDTNFRIYTAPLATLIENTVCDLRNNAYGPPNTVSIPKQAVLPVGPPLYTKQYRPVLPQKPQTSWASSPPPPSRTYLPANSGNVVSSISVSTNTVGPAGVEVPKAYIFNQHNGINYETSGPHLFPTLQPAQSGRQDGGLKTYVNARQSGWWHHQHQG.

Residues 1–21 (MFQDKGWVLVTLIALVTPSWA) form the signal peptide. N-linked (GlcNAc...) asparagine glycosylation occurs at asparagine 144.

Belongs to the major royal jelly protein family.

The protein localises to the secreted. Controls the pigmentation pattern of the adult cuticle and larval mouth parts. The protein is Protein yellow (y) of Drosophila erecta (Fruit fly).